The following is a 140-amino-acid chain: MAKKVLAMVKLQVQAGKANPSPPIGPALGQHGVNIMEFCKAFNARTADQEGMVIPVVLTVYQDRSFSFITKTPPASVLILKAAKLAKGSSDPKKIKVGKITKAQVEDIANLKMVDLNAKDMAGASKIIAGTARSMGIEVV.

The protein belongs to the universal ribosomal protein uL11 family. In terms of assembly, part of the ribosomal stalk of the 50S ribosomal subunit. Interacts with L10 and the large rRNA to form the base of the stalk. L10 forms an elongated spine to which L12 dimers bind in a sequential fashion forming a multimeric L10(L12)X complex. Post-translationally, one or more lysine residues are methylated.

Functionally, forms part of the ribosomal stalk which helps the ribosome interact with GTP-bound translation factors. This is Large ribosomal subunit protein uL11 from Desulfatibacillum aliphaticivorans.